The sequence spans 121 residues: Large ribosomal subunit protein uL14c (121 aa).

Belongs to the universal ribosomal protein uL14 family. Part of the 50S ribosomal subunit.

It is found in the plastid. It localises to the chloroplast. Functionally, binds to 23S rRNA. In Trieres chinensis (Marine centric diatom), this protein is Large ribosomal subunit protein uL14c.